Here is a 794-residue protein sequence, read N- to C-terminus: Protein SEY1 (794 aa).

The Cytoplasmic segment spans residues 1-687 (MMEVIDSVLG…KRSIIKTTTA (687 aa)). Residues 43-272 (GLDYHVISVF…ANPYYFKPQY (230 aa)) enclose the GB1/RHD3-type G domain. 53–60 (GSQSSGKS) contributes to the GTP binding site. A coiled-coil region spans residues 331 to 352 (VDHILDDREKLGEVLKNLKQEC). A helical transmembrane segment spans residues 688-708 (IPIWMYLLVVALGWNEFVMVL). Topologically, residues 709–711 (RNP) are lumenal. Residues 712-732 (LLVTLVLLFGVGFIFVNKFGL) traverse the membrane as a helical segment. Topologically, residues 733 to 794 (WGPVLNVAHN…SDNEKIEKSE (62 aa)) are cytoplasmic. The interval 770 to 794 (NSAGKESYEMKDMSDSDNEKIEKSE) is disordered. Over residues 775–794 (ESYEMKDMSDSDNEKIEKSE) the composition is skewed to basic and acidic residues.

The protein belongs to the TRAFAC class dynamin-like GTPase superfamily. GB1/RHD3 GTPase family. RHD3 subfamily.

It is found in the endoplasmic reticulum membrane. Functionally, cooperates with the reticulon proteins and tubule-shaping DP1 family proteins to generate and maintain the structure of the tubular endoplasmic reticulum network. Has GTPase activity, which is required for its function in ER organization. This Zygosaccharomyces rouxii (strain ATCC 2623 / CBS 732 / NBRC 1130 / NCYC 568 / NRRL Y-229) protein is Protein SEY1.